Reading from the N-terminus, the 338-residue chain is MDVFNVQELSFSLVRDQPYLSAFLLVMGSIGVGRVIYQTLSVFLQTFILPGTNLRKFGAKKGAWAVVTGATDGIGREFSLQLAKAGFHVFLVARNEALLASTAAEIEQKYGVSTATHSIDFSKADKSAYNSLGSSLGSVDVGVLVNNVGKSHAMPAYFVDTPEEEMSDIVSINVQATLQVTHSVLPGMVQRKRGLILNVGSFAGAVPSPMLATYSGTKAFLTTFSSALGEEVRKDNITVEHLNTYFVVSKLSKIRKASALIPKPDAYVRSVLSKIGLPCGASYSGRPNTSTPFWSHALLDYGLTLIGLQSAFISYTHGLHKDIRRRALRKMERDAKLQ.

The helical transmembrane segment at 20–40 (LSAFLLVMGSIGVGRVIYQTL) threads the bilayer. Residues Val66, Asn95, Asp120, Asn147, Tyr214, Lys218, Val247, and Ser249 each contribute to the NADP(+) site. Residue Tyr214 is the Proton donor of the active site. Residue Lys218 is the Lowers pKa of active site Tyr of the active site.

Belongs to the short-chain dehydrogenases/reductases (SDR) family.

The protein resides in the endoplasmic reticulum membrane. The enzyme catalyses a very-long-chain (3R)-3-hydroxyacyl-CoA + NADP(+) = a very-long-chain 3-oxoacyl-CoA + NADPH + H(+). It functions in the pathway lipid metabolism; fatty acid biosynthesis. In terms of biological role, component of the microsomal membrane bound fatty acid elongation system, which produces the 26-carbon very long-chain fatty acids (VLCFA) from palmitate. Catalyzes the reduction of the 3-ketoacyl-CoA intermediate that is formed in each cycle of fatty acid elongation. VLCFAs serve as precursors for ceramide and sphingolipids. This Laccaria bicolor (strain S238N-H82 / ATCC MYA-4686) (Bicoloured deceiver) protein is Very-long-chain 3-oxoacyl-CoA reductase.